We begin with the raw amino-acid sequence, 144 residues long: Small ribosomal subunit protein bS16 (144 aa).

Positions 115–144 (NEPVAEAVTPKKKAKKDDAAAESTEAEAAE) are disordered.

It belongs to the bacterial ribosomal protein bS16 family.

This Nocardia farcinica (strain IFM 10152) protein is Small ribosomal subunit protein bS16.